Consider the following 210-residue polypeptide: MAKDLDELLDEVETKFCRLDPLRLDLGERPKGGSGGGGTHSGDRNGAQEKDTLRSTETFKKEDDLDSLINEIFEEPNFDKKSFQKFKSKSSSNTSVRAPIQGLSKSCSPVYLSGSAIPCGIGTNTSQRACDRLRCVACDFQIVSYNDYMWDKSCDYLFFRNNMPEFHKLKTKLIEKKGARAYACQCSWRTVEELTDLQADHELRWVCGKH.

Residues 1–77 form a required for interaction with FAM161A region; it reads MAKDLDELLD…LINEIFEEPN (77 aa). Positions 24-59 are disordered; that stretch reads LDLGERPKGGSGGGGTHSGDRNGAQEKDTLRSTETF. A compositionally biased stretch (basic and acidic residues) spans 41–59; sequence SGDRNGAQEKDTLRSTETF.

Interacts (via N-terminus) with FAM161A (via central region); the interaction is direct.

The protein localises to the cytoplasm. It localises to the photoreceptor inner segment. Its function is as follows. May be involved in photoreceptor outer segment disk morphogenesis. The protein is Cilia- and flagella-associated protein 418 of Rattus norvegicus (Rat).